The sequence spans 426 residues: Transcriptional enhancer factor TEF-1 (426 aa).

At Met-1 the chain carries N-acetylmethionine. A compositionally biased stretch (polar residues) spans 1 to 12; it reads MEPSSWSGSESP. Positions 1–31 are disordered; that stretch reads MEPSSWSGSESPAENMERMSDSADKPIDNDA. Position 11 is a phosphoserine (Ser-11). Over residues 15–28 the composition is skewed to basic and acidic residues; the sequence is NMERMSDSADKPID. Residues 28 to 104 constitute a DNA-binding region (TEA); the sequence is DNDAEGVWSP…QVLARRKSRD (77 aa). Residue Lys-108 is modified to N6-lactoyllysine. The transcriptional activation stretch occupies residues 167–426; it reads GSSQDVKPFV…QHHIYRLVKD (260 aa).

As to quaternary structure, interacts with YAP1 and WWTR1/TAZ. In terms of processing, lactylation by AARS1 promotes nuclear localization and stabilization of YAP1, leading to increased Hippo signaling pathway. Delactylated by SIRT1. In developing skeletal muscle and myocardium, in mitotic neuroblasts both in the brain and spinal cord. At later stages of embryogenesis expressed in several developing structures such as the olfactory system, the intestine, and the kidney.

The protein localises to the nucleus. In terms of biological role, transcription factor which plays a key role in the Hippo signaling pathway, a pathway involved in organ size control and tumor suppression by restricting proliferation and promoting apoptosis. The core of this pathway is composed of a kinase cascade wherein MST1/MST2, in complex with its regulatory protein SAV1, phosphorylates and activates LATS1/2 in complex with its regulatory protein MOB1, which in turn phosphorylates and inactivates YAP1 oncoprotein and WWTR1/TAZ. Acts by mediating gene expression of YAP1 and WWTR1/TAZ, thereby regulating cell proliferation, migration and epithelial mesenchymal transition (EMT) induction. Binds specifically and cooperatively to the SPH and GT-IIC 'enhansons' (5'-GTGGAATGT-3') and activates transcription in vivo in a cell-specific manner. The activation function appears to be mediated by a limiting cell-specific transcriptional intermediary factor (TIF). Involved in cardiac development. Binds to the M-CAT motif. This is Transcriptional enhancer factor TEF-1 (Tead1) from Mus musculus (Mouse).